A 236-amino-acid chain; its full sequence is CHD1 helical C-terminal domain containing protein 1 (236 aa).

The tract at residues 1 to 29 is disordered; it reads MEASDWQGGEGDKPLEKVGSVPCLERSSS. A CHD1 helical C-terminal domain (CHCT) region spans residues 44 to 145; the sequence is LSQDTFKICK…TNQTAKFLAA (102 aa). Residues 197 to 236 are disordered; that stretch reads LEEPRSSHCSRGDSLRKLPQKPKLKKKRIKERLESPKSCS. Residues 198-212 are compositionally biased toward basic and acidic residues; it reads EEPRSSHCSRGDSLR. Over residues 214–226 the composition is skewed to basic residues; sequence LPQKPKLKKKRIK. The span at 227-236 shows a compositional bias: basic and acidic residues; it reads ERLESPKSCS.

Exclusively expressed in testes.

It is found in the cytoplasm. The protein localises to the nucleus. Its function is as follows. May play a role in regulation of apoptosis. This Mus musculus (Mouse) protein is CHD1 helical C-terminal domain containing protein 1 (Chct1).